Consider the following 270-residue polypeptide: tRNA (guanine-N(1)-)-methyltransferase (270 aa).

Residues Gly-117 and 137-142 (IGDYVL) contribute to the S-adenosyl-L-methionine site.

Belongs to the RNA methyltransferase TrmD family. In terms of assembly, homodimer.

It localises to the cytoplasm. It catalyses the reaction guanosine(37) in tRNA + S-adenosyl-L-methionine = N(1)-methylguanosine(37) in tRNA + S-adenosyl-L-homocysteine + H(+). Specifically methylates guanosine-37 in various tRNAs. The sequence is that of tRNA (guanine-N(1)-)-methyltransferase from Heliobacterium modesticaldum (strain ATCC 51547 / Ice1).